A 344-amino-acid chain; its full sequence is Protein-glutamate methylesterase/protein-glutamine glutaminase 1 (344 aa).

The 118-residue stretch at 5–122 (RVLVVDDSAT…GTQEALAEIV (118 aa)) folds into the Response regulatory domain. 4-aspartylphosphate is present on Asp56. Positions 151-343 (FMPSGDIVAI…QSILDLASAR (193 aa)) constitute a CheB-type methylesterase domain. Catalysis depends on residues Ser163, His189, and Asp285.

Belongs to the CheB family. Phosphorylated by CheA. Phosphorylation of the N-terminal regulatory domain activates the methylesterase activity.

It is found in the cytoplasm. It carries out the reaction [protein]-L-glutamate 5-O-methyl ester + H2O = L-glutamyl-[protein] + methanol + H(+). The enzyme catalyses L-glutaminyl-[protein] + H2O = L-glutamyl-[protein] + NH4(+). Functionally, involved in chemotaxis. Part of a chemotaxis signal transduction system that modulates chemotaxis in response to various stimuli. Catalyzes the demethylation of specific methylglutamate residues introduced into the chemoreceptors (methyl-accepting chemotaxis proteins or MCP) by CheR. Also mediates the irreversible deamidation of specific glutamine residues to glutamic acid. The sequence is that of Protein-glutamate methylesterase/protein-glutamine glutaminase 1 from Caulobacter vibrioides (strain ATCC 19089 / CIP 103742 / CB 15) (Caulobacter crescentus).